Consider the following 243-residue polypeptide: Pyridoxine 5'-phosphate synthase (243 aa).

N9 serves as a coordination point for 3-amino-2-oxopropyl phosphate. 11–12 (DH) is a 1-deoxy-D-xylulose 5-phosphate binding site. R20 provides a ligand contact to 3-amino-2-oxopropyl phosphate. Residue H45 is the Proton acceptor of the active site. Residues R47 and H52 each contribute to the 1-deoxy-D-xylulose 5-phosphate site. Catalysis depends on E72, which acts as the Proton acceptor. T102 is a 1-deoxy-D-xylulose 5-phosphate binding site. Residue H193 is the Proton donor of the active site. 3-amino-2-oxopropyl phosphate-binding positions include G194 and 215–216 (GH).

It belongs to the PNP synthase family. In terms of assembly, homooctamer; tetramer of dimers.

It is found in the cytoplasm. The catalysed reaction is 3-amino-2-oxopropyl phosphate + 1-deoxy-D-xylulose 5-phosphate = pyridoxine 5'-phosphate + phosphate + 2 H2O + H(+). It functions in the pathway cofactor biosynthesis; pyridoxine 5'-phosphate biosynthesis; pyridoxine 5'-phosphate from D-erythrose 4-phosphate: step 5/5. Catalyzes the complicated ring closure reaction between the two acyclic compounds 1-deoxy-D-xylulose-5-phosphate (DXP) and 3-amino-2-oxopropyl phosphate (1-amino-acetone-3-phosphate or AAP) to form pyridoxine 5'-phosphate (PNP) and inorganic phosphate. The chain is Pyridoxine 5'-phosphate synthase from Vibrio cholerae serotype O1 (strain ATCC 39315 / El Tor Inaba N16961).